Consider the following 310-residue polypeptide: Ribosomal RNA small subunit methyltransferase H (310 aa).

S-adenosyl-L-methionine is bound by residues alanine 33 to histidine 35, aspartate 53, phenylalanine 79, aspartate 100, and glutamine 107.

This sequence belongs to the methyltransferase superfamily. RsmH family.

It is found in the cytoplasm. It carries out the reaction cytidine(1402) in 16S rRNA + S-adenosyl-L-methionine = N(4)-methylcytidine(1402) in 16S rRNA + S-adenosyl-L-homocysteine + H(+). In terms of biological role, specifically methylates the N4 position of cytidine in position 1402 (C1402) of 16S rRNA. The protein is Ribosomal RNA small subunit methyltransferase H of Clostridium botulinum (strain Alaska E43 / Type E3).